We begin with the raw amino-acid sequence, 259 residues long: MATTTTEATKTSSTNGEDQKQSQNLRHQEVGHKSLLQSDDLYQYILETSVYPREPESMKELREVTAKHPWNIMTTSADEGQFLNMLIKLVNAKNTMEIGVYTGYSLLATALALPEDGKILAMDVNRENYELGLPIIEKAGVAHKIDFREGPALPVLDEIVADEKNHGTYDFIFVDADKDNYINYHKRLIDLVKIGGVIGYDNTLWNGSVVAPPDAPMRKYVRYYRDFVLELNKALAADPRIEICMLPVGDGITICRRIS.

Over residues 1 to 14 the composition is skewed to low complexity; the sequence is MATTTTEATKTSST. The interval 1-29 is disordered; the sequence is MATTTTEATKTSSTNGEDQKQSQNLRHQE. Position 2 is an N-acetylalanine (A2). K33 is a binding site for substrate. S-adenosyl-L-methionine is bound by residues T75, E97, 99 to 100, S105, D123, and A152; that span reads GV. D175 serves as a coordination point for substrate. D175 serves as a coordination point for a divalent metal cation. S-adenosyl-L-methionine is bound at residue D177. 2 residues coordinate a divalent metal cation: D201 and N202. Residue N206 coordinates substrate.

The protein belongs to the class I-like SAM-binding methyltransferase superfamily. Cation-dependent O-methyltransferase family. CCoAMT subfamily. A divalent metal cation is required as a cofactor. In terms of tissue distribution, expressed in stems and roots. Detected in leaves, siliques, flower buds, flowers. Expressed in the tapetum, but not in the endothecium. Detected in the vascular system of leaves and all flower organs, including stigma, stamens, petals and sepals.

It carries out the reaction (E)-caffeoyl-CoA + S-adenosyl-L-methionine = (E)-feruloyl-CoA + S-adenosyl-L-homocysteine + H(+). Its pathway is aromatic compound metabolism; phenylpropanoid biosynthesis. Functionally, methylates caffeoyl-CoA to feruloyl-CoA. Has a very low activity with caffeic acid and esculetin. Involved in scopoletin biosynthesis in roots. This is Caffeoyl-CoA O-methyltransferase 1 (CCOAOMT1) from Arabidopsis thaliana (Mouse-ear cress).